The following is a 311-amino-acid chain: MKYIVGARGSQLSVAQTNLVIAELKKAHPDTEYEIKTITTKGDTDSRPLFTIDQKGIFEKEIDRAVAQKEVDFAVHSLKDVPSELDDNLVLACIPKRETVNDVFISPDGSTLDSIKPGSVIGTSSLRRAVQVSRKRPDVTVKPIRGNIETRIKKASGENYDAIVLAKAGISRLGVDVKYTELSTDDFSPSPGQGAIAIVARADDSKTIEMLKKIEDPDSRLEIEAERALSDFVDSGCRFPVGAYAKSNGSEMTLTVTAFSVDGKQFLHVSKTGDKNNPKSLGQSAGEELREKGVNDLALNWREKVEEWNKT.

The residue at position 237 (Cys-237) is an S-(dipyrrolylmethanemethyl)cysteine. Residues 270–289 are disordered; it reads SKTGDKNNPKSLGQSAGEEL.

It belongs to the HMBS family. It depends on dipyrromethane as a cofactor.

The enzyme catalyses 4 porphobilinogen + H2O = hydroxymethylbilane + 4 NH4(+). The protein operates within porphyrin-containing compound metabolism; protoporphyrin-IX biosynthesis; coproporphyrinogen-III from 5-aminolevulinate: step 2/4. Its function is as follows. Tetrapolymerization of the monopyrrole PBG into the hydroxymethylbilane pre-uroporphyrinogen in several discrete steps. This is Probable porphobilinogen deaminase from Nitrosopumilus maritimus (strain SCM1).